The sequence spans 248 residues: Triosephosphate isomerase (248 aa).

9–11 (NWK) is a substrate binding site. Residue His94 is the Electrophile of the active site. Glu166 serves as the catalytic Proton acceptor. Residues Gly172, Ser212, and 233 to 234 (GG) each bind substrate.

Belongs to the triosephosphate isomerase family. As to quaternary structure, homodimer.

Its subcellular location is the cytoplasm. It catalyses the reaction D-glyceraldehyde 3-phosphate = dihydroxyacetone phosphate. It functions in the pathway carbohydrate biosynthesis; gluconeogenesis. It participates in carbohydrate degradation; glycolysis; D-glyceraldehyde 3-phosphate from glycerone phosphate: step 1/1. In terms of biological role, involved in the gluconeogenesis. Catalyzes stereospecifically the conversion of dihydroxyacetone phosphate (DHAP) to D-glyceraldehyde-3-phosphate (G3P). This is Triosephosphate isomerase from Thermoanaerobacter pseudethanolicus (strain ATCC 33223 / 39E) (Clostridium thermohydrosulfuricum).